A 320-amino-acid polypeptide reads, in one-letter code: Methylenetetrahydrofolate dehydrogenase [NAD(+)] (320 aa).

C150 is a catalytic residue. NAD(+)-binding positions include 185-186 (RS), 208-209 (DV), and 274-276 (FAC).

Belongs to the tetrahydrofolate dehydrogenase/cyclohydrolase family. As to quaternary structure, homodimer. In terms of processing, the N-terminus is blocked.

The protein resides in the cytoplasm. The protein localises to the nucleus. The enzyme catalyses (6R)-5,10-methylene-5,6,7,8-tetrahydrofolate + NAD(+) = (6R)-5,10-methenyltetrahydrofolate + NADH. Functionally, catalyzes oxidation of cytoplasmic one-carbon units for purine biosynthesis. In Saccharomyces cerevisiae (strain ATCC 204508 / S288c) (Baker's yeast), this protein is Methylenetetrahydrofolate dehydrogenase [NAD(+)] (MTD1).